The chain runs to 445 residues: C4-dicarboxylate transport protein (445 aa).

A run of 8 helical transmembrane segments spans residues 24–44 (VLYIQVLIAIVLGVLVGWLSP), 62–82 (LIKMVIAPIIFCTVVSGIAHI), 105–125 (FALILGLVVGNLLPVGHGLAA), 163–183 (GDILQVLLFAILFGFALMALG), 201–221 (FGVIAIVMKAAPVGAFGAMAF), 237–257 (LVALFYATAALFVFVVLGVIA), 322–342 (IYMTLATLFIAQALGIELSFS), and 370–390 (AGTLAAVNPALVPGMAIVFSI).

Belongs to the dicarboxylate/amino acid:cation symporter (DAACS) (TC 2.A.23) family.

It localises to the cell inner membrane. Responsible for the transport of dicarboxylates such as succinate, fumarate, and malate from the periplasm across the membrane. The sequence is that of C4-dicarboxylate transport protein from Rhodopseudomonas palustris (strain HaA2).